The sequence spans 473 residues: Ribulose bisphosphate carboxylase large chain (473 aa).

The substrate site is built by N116 and T166. K168 serves as the catalytic Proton acceptor. K170 contacts substrate. 3 residues coordinate Mg(2+): K194, D196, and E197. K194 carries the post-translational modification N6-carboxylysine. H287 serves as the catalytic Proton acceptor. Substrate contacts are provided by R288, H320, and S372.

Belongs to the RuBisCO large chain family. Type I subfamily. Heterohexadecamer of 8 large chains and 8 small chains. Mg(2+) is required as a cofactor.

The enzyme catalyses 2 (2R)-3-phosphoglycerate + 2 H(+) = D-ribulose 1,5-bisphosphate + CO2 + H2O. It carries out the reaction D-ribulose 1,5-bisphosphate + O2 = 2-phosphoglycolate + (2R)-3-phosphoglycerate + 2 H(+). In terms of biological role, ruBisCO catalyzes two reactions: the carboxylation of D-ribulose 1,5-bisphosphate, the primary event in carbon dioxide fixation, as well as the oxidative fragmentation of the pentose substrate. Both reactions occur simultaneously and in competition at the same active site. This Cupriavidus metallidurans (strain ATCC 43123 / DSM 2839 / NBRC 102507 / CH34) (Ralstonia metallidurans) protein is Ribulose bisphosphate carboxylase large chain.